We begin with the raw amino-acid sequence, 186 residues long: UPF0397 protein LBUL_1584 (186 aa).

5 helical membrane-spanning segments follow: residues 13 to 33 (IAAL…ASIP), 46 to 66 (AFLA…VGFI), 79 to 99 (TWWN…LYAL), 114 to 134 (VIFN…LGSV), and 150 to 170 (QAGL…TILL).

The protein belongs to the UPF0397 family.

It is found in the cell membrane. The chain is UPF0397 protein LBUL_1584 from Lactobacillus delbrueckii subsp. bulgaricus (strain ATCC BAA-365 / Lb-18).